The sequence spans 232 residues: MADYDSAKYWSKQGARRGLQKTRYYCQICQRQCKDANGFQSHNKSPSHLRKISQVTAEDARRYNIQFEKGFLQLLKQRHGEKWIDANKVYNEYVQDRDHVHMNATMHRSLTQFVRYLGRAGKVDVDMDIDDTSENVEGPLLIRIHPSSLSSPSEDGMLRSQQEEQEVIAAELLKRQLNRAKRQTEKVYQPEMKSEISGDSTLKRVQVTFHGNGRVNKKKKKVPPRKDGIKFR.

The segment at 24 to 48 adopts a C2H2-type zinc-finger fold; sequence YYCQICQRQCKDANGFQSHNKSPSH. Disordered stretches follow at residues 180 to 199 and 211 to 232; these read AKRQ…ISGD and GNGR…IKFR.

The protein resides in the nucleus. This is Zinc finger protein RTS2 (RTS2) from Saccharomyces cerevisiae (strain ATCC 204508 / S288c) (Baker's yeast).